Reading from the N-terminus, the 366-residue chain is MAGNTFGQLFTVTTFGESHGAGLGCIIDGCPPGLELSEADIQFDLDRRKPGTSRHVTQRREADQVEILSGVFEGKTTGTPIALLIRNTDQRSKDYGNIATSFRPGHADYTYWHKYGTRDYRGGGRSSARETAARVAAGAVAKKWLKEKFGTEITAYVTQVGEKEIRFEGCEHISQNPFFAANHSQIAELENYMDSVRKSLDSVGAKLHIEAANVPVGLGEPVFDRLDAEIAYAMMGINAVKGVEIGAGFDSVTQRGSEHGDELTPQGFLSNHSGGILGGISTGQDIHVNIAIKPTSSIATPRRSIDINGNPIELATHGRHDPCVGLRAAPIAEAMLALVLIDHALRHRAQNADVQVNTPDITLSNK.

Residues Arg-48 and Arg-54 each contribute to the NADP(+) site. FMN is bound by residues 125-127 (RSS), 238-239 (NA), Gly-278, 293-297 (KPTSS), and Arg-319.

This sequence belongs to the chorismate synthase family. Homotetramer. FMNH2 serves as cofactor.

The catalysed reaction is 5-O-(1-carboxyvinyl)-3-phosphoshikimate = chorismate + phosphate. It participates in metabolic intermediate biosynthesis; chorismate biosynthesis; chorismate from D-erythrose 4-phosphate and phosphoenolpyruvate: step 7/7. Functionally, catalyzes the anti-1,4-elimination of the C-3 phosphate and the C-6 proR hydrogen from 5-enolpyruvylshikimate-3-phosphate (EPSP) to yield chorismate, which is the branch point compound that serves as the starting substrate for the three terminal pathways of aromatic amino acid biosynthesis. This reaction introduces a second double bond into the aromatic ring system. In Neisseria meningitidis serogroup A / serotype 4A (strain DSM 15465 / Z2491), this protein is Chorismate synthase.